The following is a 901-amino-acid chain: HTH-type transcriptional regulator MalT (901 aa).

39–46 contacts ATP; the sequence is SPAGYGKT. Positions 829-894 constitute an HTH luxR-type domain; sequence ELIRTSPLTQ…AAVQHAQKLL (66 aa). The segment at residues 853–872 is a DNA-binding region (H-T-H motif); it reads NEQIAGELEVAATTIKTHIR.

It belongs to the MalT family. As to quaternary structure, monomer in solution. Oligomerizes to an active state in the presence of the positive effectors ATP and maltotriose.

Its activity is regulated as follows. Activated by ATP and maltotriose, which are both required for DNA binding. In terms of biological role, positively regulates the transcription of the maltose regulon whose gene products are responsible for uptake and catabolism of malto-oligosaccharides. Specifically binds to the promoter region of its target genes, recognizing a short DNA motif called the MalT box. This is HTH-type transcriptional regulator MalT from Escherichia coli O45:K1 (strain S88 / ExPEC).